An 860-amino-acid polypeptide reads, in one-letter code: DNA mismatch repair protein MutS (860 aa).

607–614 (GPNMSGKS) is a binding site for ATP.

The protein belongs to the DNA mismatch repair MutS family.

In terms of biological role, this protein is involved in the repair of mismatches in DNA. It is possible that it carries out the mismatch recognition step. This protein has a weak ATPase activity. The polypeptide is DNA mismatch repair protein MutS (Listeria monocytogenes serotype 4b (strain CLIP80459)).